The primary structure comprises 41 residues: uncharacterized protein (41 aa).

This is an uncharacterized protein from Bacillus subtilis (strain 168).